The primary structure comprises 511 residues: Bifunctional purine biosynthesis protein PurH (511 aa).

The region spanning 1–146 is the MGS-like domain; the sequence is MTKRALVSVS…KNHADVTVVV (146 aa).

The protein belongs to the PurH family.

The enzyme catalyses (6R)-10-formyltetrahydrofolate + 5-amino-1-(5-phospho-beta-D-ribosyl)imidazole-4-carboxamide = 5-formamido-1-(5-phospho-D-ribosyl)imidazole-4-carboxamide + (6S)-5,6,7,8-tetrahydrofolate. It carries out the reaction IMP + H2O = 5-formamido-1-(5-phospho-D-ribosyl)imidazole-4-carboxamide. Its pathway is purine metabolism; IMP biosynthesis via de novo pathway; 5-formamido-1-(5-phospho-D-ribosyl)imidazole-4-carboxamide from 5-amino-1-(5-phospho-D-ribosyl)imidazole-4-carboxamide (10-formyl THF route): step 1/1. It participates in purine metabolism; IMP biosynthesis via de novo pathway; IMP from 5-formamido-1-(5-phospho-D-ribosyl)imidazole-4-carboxamide: step 1/1. The sequence is that of Bifunctional purine biosynthesis protein PurH from Shouchella clausii (strain KSM-K16) (Alkalihalobacillus clausii).